We begin with the raw amino-acid sequence, 583 residues long: MERSMYAGRVRSEHIGTTITLKGWVSRRRNLGGLIFIDLRDREGLMQLVVNPENTDAAVVETAESLRSEFVIEVTGTVEAREQANDNLPTGAVELKVEDLKVLNTAKTTPFEIKDGVEASDDTRMRYRYLDLRRPEMLENFKLRAKVTHTIRNYLDDLEFIDVETPMLTKSTPEGARDYLVPSRVSQGHFYALPQSPQITKQLLMNAGFDRYYQIVKCFRDEDLRGDRQPEFTQVDLETSFLNEQEIQDITEGLIAKVMKETKGVEVTLPFPRMSYDDAMNNYGSDKPDTRFDMLLQDLTELVKDVDFKVFAEAPAVKAIVVKGNADKYSRKSIDKLTDFAKQFGAKGLAWVKMTDGVLAGPVAKFLTSIEEKLTDALQIEENDLVLFVADTLEIANNTLGALRNQIAKELDMIDNTKFNFLWVVDWPMFEWSEEEGRYMSAHHPFTLPTEDSAAELEGDLSKVRAVAYDIVLNGYELGGGSLRINQKDLQERMLKALGFSEESAYEQFGFLLEAMDYGFPPHGGLALGLDRFVMLLAGKDNIREVIAFPKNNKASDPMTQAPSLVADKQLEELALHVELENE.

Position 174 (Glu174) interacts with L-aspartate. Positions 198-201 are aspartate; the sequence is QITK. Arg220 is a binding site for L-aspartate. ATP contacts are provided by residues 220 to 222 and Gln229; that span reads RDE. His443 lines the L-aspartate pocket. Glu477 is a binding site for ATP. Residue Arg484 coordinates L-aspartate. 529–532 is a binding site for ATP; sequence GLDR.

The protein belongs to the class-II aminoacyl-tRNA synthetase family. Type 1 subfamily. Homodimer.

The protein resides in the cytoplasm. It carries out the reaction tRNA(Asp) + L-aspartate + ATP = L-aspartyl-tRNA(Asp) + AMP + diphosphate. In terms of biological role, catalyzes the attachment of L-aspartate to tRNA(Asp) in a two-step reaction: L-aspartate is first activated by ATP to form Asp-AMP and then transferred to the acceptor end of tRNA(Asp). This is Aspartate--tRNA ligase from Streptococcus thermophilus (strain ATCC BAA-491 / LMD-9).